The following is a 522-amino-acid chain: ARS-binding protein 1 (522 aa).

The HTH CENPB-type domain maps to 70-144 (DVKRNRPPKY…RKRHILHAIN (75 aa)). A Phosphothreonine modification is found at Thr-460.

As to quaternary structure, interacts with mcm10.

Its subcellular location is the nucleus. Binds, preferentially, to the Maundrell ARS consensus sequence within ARS3002. The polypeptide is ARS-binding protein 1 (abp1) (Schizosaccharomyces pombe (strain 972 / ATCC 24843) (Fission yeast)).